We begin with the raw amino-acid sequence, 113 residues long: Ig kappa chain V-II region 26-10 (113 aa).

The framework-1 stretch occupies residues 1–23 (DVVMTQTPLSLPVSLGDQASISC). A disulfide bridge links C23 with C93. Residues 24–39 (RSSQSLVHSNGNTYLN) form a complementarity-determining-1 region. A framework-2 region spans residues 40 to 54 (WYLQKAGQSPKLLIY). Positions 55–61 (KVSNRFS) are complementarity-determining-2. A framework-3 region spans residues 62 to 93 (GVPDRFSGSGSGTDFTLKISRVEAEDLGIYFC). The complementarity-determining-3 stretch occupies residues 94-102 (SQTTHVPPT). A framework-4 region spans residues 103 to 112 (FGGGTKLEIK).

This chain is Ig kappa chain V-II region 26-10, found in Mus musculus (Mouse).